The chain runs to 362 residues: Serine/threonine-protein phosphatase 2A activator 1 (362 aa).

The segment covering 1–10 (MQPHTQPPQP) has biased composition (pro residues). 2 disordered regions span residues 1–28 (MQPH…APPR) and 339–362 (NVEE…PWAR). Residues 340-351 (VEERGDKNEGKG) are compositionally biased toward basic and acidic residues.

The protein belongs to the PTPA-type PPIase family.

Its subcellular location is the cytoplasm. The protein resides in the nucleus. It catalyses the reaction [protein]-peptidylproline (omega=180) = [protein]-peptidylproline (omega=0). PPIases accelerate the folding of proteins. It catalyzes the cis-trans isomerization of proline imidic peptide bonds in oligopeptides. Acts as a regulatory subunit for PP2A-like phosphatases modulating their activity or substrate specificity, probably by inducing a conformational change in the catalytic subunit, a direct target of the PPIase. Can reactivate inactive phosphatase PP2A-phosphatase methylesterase complexes (PP2Ai) in presence of ATP and Mg(2+) by dissociating the inactive form from the complex. The sequence is that of Serine/threonine-protein phosphatase 2A activator 1 (RRD1) from Cryptococcus neoformans var. neoformans serotype D (strain B-3501A) (Filobasidiella neoformans).